A 141-amino-acid chain; its full sequence is Ribonuclease P protein component (141 aa).

Disordered stretches follow at residues 37-56 (RTEEESNAAKTGDNPRVGFT) and 114-141 (RRITAKGERRSGGKRRTERPEPGPVNGK). Residues 114-124 (RRITAKGERRS) show a composition bias toward basic and acidic residues.

It belongs to the RnpA family. As to quaternary structure, consists of a catalytic RNA component (M1 or rnpB) and a protein subunit.

The enzyme catalyses Endonucleolytic cleavage of RNA, removing 5'-extranucleotides from tRNA precursor.. Functionally, RNaseP catalyzes the removal of the 5'-leader sequence from pre-tRNA to produce the mature 5'-terminus. It can also cleave other RNA substrates such as 4.5S RNA. The protein component plays an auxiliary but essential role in vivo by binding to the 5'-leader sequence and broadening the substrate specificity of the ribozyme. The chain is Ribonuclease P protein component from Brucella melitensis biotype 2 (strain ATCC 23457).